The chain runs to 505 residues: Lysine--tRNA ligase (505 aa).

Residues Glu-415 and Glu-422 each coordinate Mg(2+).

It belongs to the class-II aminoacyl-tRNA synthetase family. As to quaternary structure, homodimer. Mg(2+) serves as cofactor.

Its subcellular location is the cytoplasm. It catalyses the reaction tRNA(Lys) + L-lysine + ATP = L-lysyl-tRNA(Lys) + AMP + diphosphate. This Pectobacterium atrosepticum (strain SCRI 1043 / ATCC BAA-672) (Erwinia carotovora subsp. atroseptica) protein is Lysine--tRNA ligase.